Here is a 411-residue protein sequence, read N- to C-terminus: Peptidase T (411 aa).

Residue histidine 78 participates in Zn(2+) binding. Aspartate 80 is an active-site residue. Residue aspartate 140 coordinates Zn(2+). Glutamate 173 functions as the Proton acceptor in the catalytic mechanism. Positions 174, 196, and 379 each coordinate Zn(2+).

It belongs to the peptidase M20B family. Zn(2+) serves as cofactor.

It is found in the cytoplasm. It catalyses the reaction Release of the N-terminal residue from a tripeptide.. In terms of biological role, cleaves the N-terminal amino acid of tripeptides. The chain is Peptidase T from Yersinia pseudotuberculosis serotype O:3 (strain YPIII).